Consider the following 258-residue polypeptide: L-aspartate dehydrogenase 1 (258 aa).

The NAD(+) site is built by A121 and N181. H211 is a catalytic residue.

It belongs to the L-aspartate dehydrogenase family.

The enzyme catalyses L-aspartate + NADP(+) + H2O = oxaloacetate + NH4(+) + NADPH + H(+). It catalyses the reaction L-aspartate + NAD(+) + H2O = oxaloacetate + NH4(+) + NADH + H(+). It functions in the pathway cofactor biosynthesis; NAD(+) biosynthesis; iminoaspartate from L-aspartate (dehydrogenase route): step 1/1. Functionally, specifically catalyzes the NAD or NADP-dependent dehydrogenation of L-aspartate to iminoaspartate. This chain is L-aspartate dehydrogenase 1, found in Bordetella pertussis (strain Tohama I / ATCC BAA-589 / NCTC 13251).